Here is a 166-residue protein sequence, read N- to C-terminus: MTWTTPDLCDRFPEVAVAEPLFRHFGGRTTFSGPIATVRCVEDNSRIRELASTPGDGRVLVVDGQGSLRHALFGDQIGAQAVANGWAGVLIHGCVRDVEILAGLPLGVLALAACPRRTERRDLGDVDVPVNFAGVAFVPGHWLYADANGVVVAAAPLSLEVVGMEH.

Substrate is bound by residues 74–77 and arginine 96; that span reads GDQI. Residue aspartate 97 coordinates a divalent metal cation.

The protein belongs to the class II aldolase/RraA-like family. As to quaternary structure, homotrimer. A divalent metal cation is required as a cofactor.

It carries out the reaction 4-hydroxy-4-methyl-2-oxoglutarate = 2 pyruvate. The catalysed reaction is oxaloacetate + H(+) = pyruvate + CO2. Its function is as follows. Catalyzes the aldol cleavage of 4-hydroxy-4-methyl-2-oxoglutarate (HMG) into 2 molecules of pyruvate. Also contains a secondary oxaloacetate (OAA) decarboxylase activity due to the common pyruvate enolate transition state formed following C-C bond cleavage in the retro-aldol and decarboxylation reactions. This Xanthomonas campestris pv. campestris (strain B100) protein is Putative 4-hydroxy-4-methyl-2-oxoglutarate aldolase.